The following is a 242-amino-acid chain: DNA repair protein RecO (242 aa).

This sequence belongs to the RecO family.

In terms of biological role, involved in DNA repair and RecF pathway recombination. The chain is DNA repair protein RecO from Vibrio atlanticus (strain LGP32) (Vibrio splendidus (strain Mel32)).